The chain runs to 427 residues: G2/mitotic-specific cyclin-B1 (427 aa).

Positions 33 to 126 (ATSKPGLRPR…DTPSPSPMET (94 aa)) are disordered. Lys-73 carries the N6-acetyllysine modification. The segment covering 100 to 110 (EPEHVKEDKLS) has biased composition (basic and acidic residues). Ser-120 bears the Phosphoserine; by CDK1 mark. Ser-122 carries the phosphoserine modification. Ser-127 carries the post-translational modification Phosphoserine; by PLK1. A Phosphoserine modification is found at Ser-141. Interaction with CDK2 stretches follow at residues 163–171 (EYVKDIYAY) and 252–255 (YEEM). Residue Thr-315 is modified to Phosphothreonine.

It belongs to the cyclin family. Cyclin AB subfamily. As to quaternary structure, interacts with the CDC2 protein kinase to form a serine/threonine kinase holoenzyme complex also known as maturation promoting factor (MPF). The cyclin subunit imparts substrate specificity to the complex. Binds HEI10. Interacts with catalytically active RALBP1 and CDC2 during mitosis to form an endocytotic complex during interphase. Interacts with CCNF; interaction is required for nuclear localization. Interacts with CDK5RAP3. Interacts with RFPL4A and UBE2A. Interacts with INCA1. Ubiquitinated by the SCF(NIPA) complex during interphase, leading to its destruction. Deubiquitinated by USP22 during G2/M phase. In terms of processing, phosphorylated by PLK1 at Ser-127 on centrosomes during prophase: phosphorylation by PLK1 does not cause nuclear import. Phosphorylation at Ser-141 was also reported to be mediated by PLK1 but Ser-127 seems to be the primary phosphorylation site.

Its subcellular location is the cytoplasm. It is found in the nucleus. The protein resides in the cytoskeleton. The protein localises to the microtubule organizing center. It localises to the centrosome. Its function is as follows. Essential for the control of the cell cycle at the G2/M (mitosis) transition. This chain is G2/mitotic-specific cyclin-B1 (CCNB1), found in Bos taurus (Bovine).